The chain runs to 433 residues: L-lysine 2,3-aminomutase (433 aa).

One can recognise a Radical SAM core domain in the interval 122–334 (HRYPDRVLFY…SLIGHTTGFA (213 aa)). Positions 136, 140, and 143 each coordinate [4Fe-4S] cluster. C279 serves as a coordination point for Zn(2+). K348 is subject to N6-(pyridoxal phosphate)lysine. Residues C389, C392, and C396 each contribute to the Zn(2+) site.

It belongs to the radical SAM superfamily. KamA family. [4Fe-4S] cluster is required as a cofactor. The cofactor is pyridoxal 5'-phosphate. Requires Zn(2+) as cofactor.

The enzyme catalyses L-lysine = (3S)-3,6-diaminohexanoate. Its function is as follows. Catalyzes the interconversion of L-alpha-lysine and L-beta-lysine. Is involved in the biosynthesis pathway of N6-acetyl-beta-lysine, a compatible solute produced by methanogenic archaea that helps cells to cope with salt stress. The chain is L-lysine 2,3-aminomutase (ablA) from Methanococcus maripaludis (strain DSM 14266 / JCM 13030 / NBRC 101832 / S2 / LL).